Here is a 213-residue protein sequence, read N- to C-terminus: MVNYPNGRSRAYSTVPKKKKSLTELSVTKKSTSKTKGMVAFGKRGMNFEAEINATNEYYLSRGLAVIHKKPTPIQIVKVDYPQRSRAKITEAYFRQASTTDYSGVYKGHYIDFEAKETQQKTVFPLKNFHEHQIVHMSNVLAQGGIAFVLLHFARLNETYLLPSSCLITFYYEKGGLKSIPLSHIRENGYKIETNHIPRIPYLEIVNKLCEVQ.

4 residues coordinate Mg(2+): Thr-99, Asp-101, Glu-114, and Gln-133.

It belongs to the RecU family. Mg(2+) serves as cofactor.

The protein localises to the cytoplasm. It carries out the reaction Endonucleolytic cleavage at a junction such as a reciprocal single-stranded crossover between two homologous DNA duplexes (Holliday junction).. Its function is as follows. Endonuclease that resolves Holliday junction intermediates in genetic recombination. Cleaves mobile four-strand junctions by introducing symmetrical nicks in paired strands. Promotes annealing of linear ssDNA with homologous dsDNA. Required for DNA repair, homologous recombination and chromosome segregation. The protein is Holliday junction resolvase RecU of Lactococcus lactis subsp. lactis (strain IL1403) (Streptococcus lactis).